Here is a 213-residue protein sequence, read N- to C-terminus: Uridine kinase (213 aa).

An ATP-binding site is contributed by 15–22 (GASASGKS).

The protein belongs to the uridine kinase family.

The protein localises to the cytoplasm. It carries out the reaction uridine + ATP = UMP + ADP + H(+). It catalyses the reaction cytidine + ATP = CMP + ADP + H(+). It functions in the pathway pyrimidine metabolism; CTP biosynthesis via salvage pathway; CTP from cytidine: step 1/3. Its pathway is pyrimidine metabolism; UMP biosynthesis via salvage pathway; UMP from uridine: step 1/1. This is Uridine kinase from Pectobacterium atrosepticum (strain SCRI 1043 / ATCC BAA-672) (Erwinia carotovora subsp. atroseptica).